Consider the following 480-residue polypeptide: UDP-glucose 6-dehydrogenase 3 (480 aa).

Residues glycine 8–glycine 13, aspartate 33, arginine 38, valine 86–threonine 90, serine 127–threonine 128, and glutamate 161 each bind NAD(+). Substrate-binding positions include glutamate 157–glutamate 161, lysine 216–leucine 223, and arginine 256–glycine 269. Cysteine 272 serves as the catalytic Nucleophile. Cysteine 272 to lysine 275 provides a ligand contact to NAD(+). Phenylalanine 334–lysine 335 contacts substrate. Arginine 342 is a binding site for NAD(+). A substrate-binding site is contributed by arginine 447.

It belongs to the UDP-glucose/GDP-mannose dehydrogenase family.

It carries out the reaction UDP-alpha-D-glucose + 2 NAD(+) + H2O = UDP-alpha-D-glucuronate + 2 NADH + 3 H(+). The protein operates within nucleotide-sugar biosynthesis; UDP-alpha-D-glucuronate biosynthesis; UDP-alpha-D-glucuronate from UDP-alpha-D-glucose: step 1/1. Inhibited by UDP-xylose. Its function is as follows. Involved in the biosynthesis of UDP-glucuronic acid (UDP-GlcA), providing nucleotide sugars for cell-wall polymers. Required for the formation of cell wall ingrowths on the outer cell walls of nematode-induced syncytia. In Arabidopsis thaliana (Mouse-ear cress), this protein is UDP-glucose 6-dehydrogenase 3 (UGD3).